A 459-amino-acid polypeptide reads, in one-letter code: Mitochondrial distribution and morphology protein 10 (459 aa).

This sequence belongs to the MDM10 family. As to quaternary structure, component of the ER-mitochondria encounter structure (ERMES) or MDM complex, composed of mmm1, mdm10, mdm12 and mdm34. Associates with the mitochondrial outer membrane sorting assembly machinery SAM(core) complex.

The protein resides in the mitochondrion outer membrane. In terms of biological role, component of the ERMES/MDM complex, which serves as a molecular tether to connect the endoplasmic reticulum and mitochondria. Components of this complex are involved in the control of mitochondrial shape and protein biogenesis and may function in phospholipid exchange. mdm10 is involved in the late assembly steps of the general translocase of the mitochondrial outer membrane (TOM complex). Functions in the tom40-specific route of the assembly of outer membrane beta-barrel proteins, including the association of tom40 with the receptor tom22 and small TOM proteins. Can associate with the SAM(core) complex as well as the mdm12-mmm1 complex, both involved in late steps of the major beta-barrel assembly pathway, that is responsible for biogenesis of all outer membrane beta-barrel proteins. May act as a switch that shuttles between both complexes and channels precursor proteins into the tom40-specific pathway. Plays a role in mitochondrial morphology and in the inheritance of mitochondria. This is Mitochondrial distribution and morphology protein 10 (mdmB) from Aspergillus terreus (strain NIH 2624 / FGSC A1156).